The chain runs to 331 residues: MIFQSSSRLYAAVSSLLWPAILCAGLTGAYFAFRSDMHLLWFNVVYLSTVAIIALFERLMPYEKTWQKRDGETFNDIAHTLLTKGGVQIAAAIGTSFPMAVATVAQPALSYHSHFWPDQWPMAFQVVLGLVIAEFGLYMAHRLAHEHLSLWRFHALHHSVGRLWVINTGRFHFIDTLFKIALGQIPLYLLGAPLPVFLWIGAVTAFIGLLTHCNVDMRTGPLDLIFSTPRLHRWHHSKVLAEGNTNYGENLVIWDQLLGTFHNPPRPSSTDIGITGKVAKGFLAQLAQPFSRKGRKEIIGKKPKELILQEEQAAKAAAARRNANAKIRKSG.

A run of 5 helical transmembrane segments spans residues 13–33 (VSSL…YFAF), 37–57 (MHLL…ALFE), 85–105 (GGVQ…ATVA), 120–140 (WPMA…LYMA), and 189–209 (LLGA…FIGL). In terms of domain architecture, Fatty acid hydroxylase spans 126–260 (VVLGLVIAEF…LVIWDQLLGT (135 aa)).

It belongs to the sterol desaturase family.

It is found in the cell inner membrane. Its pathway is lipid metabolism. Functionally, involved in the biosynthesis of ornithine lipids (OLs), which are phosphorus-free membrane lipids. Is responsible for the hydroxylation of OL within the ornithine moiety. The chain is Ornithine lipid hydroxylase OlsE from Rhizobium tropici.